The primary structure comprises 188 residues: dCTP deaminase (188 aa).

Residues 111 to 116, 135 to 137, Gln-156, Tyr-170, and Gln-180 each bind dCTP; these read KSTYAR and TLE. The active-site Proton donor/acceptor is the Glu-137.

It belongs to the dCTP deaminase family. Homotrimer.

The enzyme catalyses dCTP + H2O + H(+) = dUTP + NH4(+). It participates in pyrimidine metabolism; dUMP biosynthesis; dUMP from dCTP (dUTP route): step 1/2. In terms of biological role, catalyzes the deamination of dCTP to dUTP. The protein is dCTP deaminase of Dichelobacter nodosus (strain VCS1703A).